A 95-amino-acid chain; its full sequence is Secretoglobin family 1C member 1 (95 aa).

An N-terminal signal peptide occupies residues Met1–Ala23.

It belongs to the secretoglobin family.

It is found in the secreted. The protein is Secretoglobin family 1C member 1 (Scgb1c1) of Mus musculus (Mouse).